Consider the following 80-residue polypeptide: Defensin-like protein 51 (80 aa).

The N-terminal stretch at 1–27 (MGFTKILVTFFLVGLLVISSSPQNAIA) is a signal peptide. Disulfide bonds link cysteine 39-cysteine 79, cysteine 43-cysteine 66, cysteine 52-cysteine 77, and cysteine 56-cysteine 78.

The protein belongs to the DEFL family.

It is found in the secreted. In Arabidopsis thaliana (Mouse-ear cress), this protein is Defensin-like protein 51 (LCR48).